A 497-amino-acid polypeptide reads, in one-letter code: Glutamate--tRNA ligase (497 aa).

Positions Pro12 to Asn22 match the 'HIGH' region motif. Residues Lys259–Arg263 carry the 'KMSKS' region motif. An ATP-binding site is contributed by Lys262.

This sequence belongs to the class-I aminoacyl-tRNA synthetase family. Glutamate--tRNA ligase type 1 subfamily. As to quaternary structure, monomer.

The protein resides in the cytoplasm. The catalysed reaction is tRNA(Glu) + L-glutamate + ATP = L-glutamyl-tRNA(Glu) + AMP + diphosphate. Catalyzes the attachment of glutamate to tRNA(Glu) in a two-step reaction: glutamate is first activated by ATP to form Glu-AMP and then transferred to the acceptor end of tRNA(Glu). The polypeptide is Glutamate--tRNA ligase (Lacticaseibacillus casei (strain BL23) (Lactobacillus casei)).